The following is a 457-amino-acid chain: Multidrug resistance protein MdtK (457 aa).

Residues 1-10 (MQKYISEARL) lie on the Cytoplasmic side of the membrane. Residues 11 to 31 (LLALAIPVILAQIAQTAMGFV) form a helical membrane-spanning segment. Topologically, residues 32 to 52 (DTVMAGGYSATDMAAVAIGTS) are periplasmic. A helical membrane pass occupies residues 53 to 73 (IWLPAILFGHGLLLALTPVIA). The Cytoplasmic segment spans residues 74 to 92 (QLNGSGRRERIAHQVRQGF). A helical membrane pass occupies residues 93 to 113 (WLAGFVSVLIMLVLWNAGYII). The Periplasmic portion of the chain corresponds to 114-126 (RSMENIDPALADK). A helical membrane pass occupies residues 127-147 (AVGYLRALLWGAPGYLFFQVA). Topologically, residues 148 to 159 (RNQCEGLAKTKP) are cytoplasmic. A helical membrane pass occupies residues 160–180 (GMVMGFIGLLVNIPVNYIFIY). Residues 181–188 (GHFGMPEL) lie on the Periplasmic side of the membrane. The helical transmembrane segment at 189–209 (GGVGCGVATAAVYWVMFLAMV) threads the bilayer. The Cytoplasmic segment spans residues 210-242 (SYIKRARSMRDIRNEKGTAKPDPAVMKRLIQLG). Residues 243-263 (LPIALALFFEVTLFAVVALLV) form a helical membrane-spanning segment. The Periplasmic segment spans residues 264–275 (SPLGIVDVAGHQ). The chain crosses the membrane as a helical span at residues 276 to 296 (IALNFSSLMFVLPMSLAAAVT). Over 297 to 313 (IRVGYRLGQGSTLDAQT) the chain is Cytoplasmic. A helical transmembrane segment spans residues 314 to 334 (AARTGLMVGVCMATLTAIFTV). Residues 335 to 349 (SLREQIALLYNDNPE) are Periplasmic-facing. The chain crosses the membrane as a helical span at residues 350 to 370 (VVTLAAHLMLLAAVYQISDSI). The Cytoplasmic segment spans residues 371-386 (QVIGSGILRGYKDTRS). Residues 387–407 (IFYITFTAYWVLGLPSGYILA) form a helical membrane-spanning segment. Residues 408–417 (LTDLVVEPMG) are Periplasmic-facing. The chain crosses the membrane as a helical span at residues 418–438 (PAGFWIGFIIGLTSAAIMMML). Over 439 to 457 (RMRFLQRMPSAIILQRASR) the chain is Cytoplasmic.

It belongs to the multi antimicrobial extrusion (MATE) (TC 2.A.66.1) family. MdtK subfamily.

It localises to the cell inner membrane. Multidrug efflux pump that functions probably as a Na(+)/drug antiporter. The sequence is that of Multidrug resistance protein MdtK from Shigella boydii serotype 4 (strain Sb227).